The following is a 706-amino-acid chain: Envelope glycoprotein H (706 aa).

A signal peptide spans 1-18; that stretch reads MQLLCVFCLVLLWEVGAA. At 19–682 the chain is on the virion surface side; sequence SLSEVKLHLD…LYEERAHVVL (664 aa). Asn60 carries an N-linked (GlcNAc...) asparagine; by host glycan. The interval 165–229 is interaction with gL; the sequence is DKFQYTGAMT…QSGDYSLVIV (65 aa). The cysteines at positions 278 and 335 are disulfide-linked. Asn435 carries an N-linked (GlcNAc...) asparagine; by host glycan. 2 disulfide bridges follow: Cys454-Cys478 and Cys534-Cys587. Asn549 and Asn604 each carry an N-linked (GlcNAc...) asparagine; by host glycan. A disulfide bridge connects residues Cys612 and Cys615. N-linked (GlcNAc...) asparagine; by host glycosylation occurs at Asn664. A helical transmembrane segment spans residues 683–703; it reads AIILYFIAFALGIFLVHKIVM. The Intravirion segment spans residues 704-706; the sequence is FFL.

Belongs to the herpesviridae glycoprotein H family. As to quaternary structure, interacts with glycoprotein L (gL); this interaction is necessary for the correct processing and cell surface expression of gH. The heterodimer gH/gL seems to interact with gB trimers during fusion. The heterodimer gH/gL interacts with host EPHA2 to facilitate virus internalization and fusion. Interacts with glycoprotein 42/BZLF2. N-glycosylated, O-glycosylated, and sialylated.

The protein localises to the virion membrane. Its subcellular location is the host cell membrane. The protein resides in the host endosome membrane. The heterodimer glycoprotein H-glycoprotein L is required for the fusion of viral and plasma membranes leading to virus entry into the host cell. Following initial binding to host receptor, membrane fusion is mediated by the fusion machinery composed of gB and the heterodimer gH/gL. May also be involved in the fusion between the virion envelope and the outer nuclear membrane during virion morphogenesis. The heterodimer gH/gL targets also host EPHA2 to promote viral entry. The chain is Envelope glycoprotein H from Homo sapiens (Human).